The following is an 853-amino-acid chain: Leucine--tRNA ligase (853 aa).

Residues 42 to 52 carry the 'HIGH' region motif; sequence PYPSGNLHMGH. The 'KMSKS' region signature appears at 615–619; the sequence is KMSKS. Position 618 (Lys618) interacts with ATP.

This sequence belongs to the class-I aminoacyl-tRNA synthetase family.

The protein localises to the cytoplasm. It carries out the reaction tRNA(Leu) + L-leucine + ATP = L-leucyl-tRNA(Leu) + AMP + diphosphate. The polypeptide is Leucine--tRNA ligase (Crocosphaera subtropica (strain ATCC 51142 / BH68) (Cyanothece sp. (strain ATCC 51142))).